Here is a 710-residue protein sequence, read N- to C-terminus: Amyloid beta precursor protein binding family B member 1 (710 aa).

The residue at position 135 (serine 135) is a Phosphoserine. Disordered regions lie at residues 143–256 (EQGP…SDLP) and 276–300 (GTTQWEPPGRASPSQGSSPQEESQL). The span at 145–173 (GPDEGEEKAAGEAEEDDEDEEEEEEEEDL) shows a compositional bias: acidic residues. Lysine 204 is modified (N6-acetyllysine). Residues 223-234 (SWATLSQGSPSY) are compositionally biased toward polar residues. The region spanning 253–285 (SDLPAGWMRVQDTSGTYYWHIPTGTTQWEPPGR) is the WW domain. Residues 287-299 (SPSQGSSPQEESQ) are compositionally biased toward low complexity. Residues 370–509 (FAVRSLGWVE…SKIMSERRNA (140 aa)) enclose the PID 1 domain. Serine 459 bears the Phosphoserine; by PKC mark. At serine 517 the chain carries Phosphoserine. The region spanning 542–699 (KFQVYYLGNV…RRGVQSLWGS (158 aa)) is the PID 2 domain. Phosphotyrosine; by ABL1 is present on tyrosine 547. Serine 610 is modified (phosphoserine; by SGK1). Residue lysine 701 is modified to N6-acetyllysine.

Component of a complex, at least composed of APBB1, RASD1/DEXRAS1 and APP. Interacts (via PID domain 2) with APP (with the intracellular domain of the amyloid-beta precursor protein). Interacts (via PID domain 2) with RASD1/DEXRAS1; impairs the transcription activation activity. Interacts (via PID domain 1) with KAT5/TIP60. Interacts (via the WW domain) with the proline-rich region of APBB1IP. Interacts with TSHZ1 and TSHZ2. Interacts (via the WW domain) with histone H2AX (when phosphorylated on 'Tyr-142') and the proline-rich region of ENAH. Interacts with MAPK8. Interacts (via PID domain 1) with TSHZ3 (via homeobox domain). Interacts with SET. Found in a trimeric complex with HDAC1 and TSHZ3; the interaction between HDAC1 and APBB1 is mediated by TSHZ3. Interacts (via WWW domain) with NEK6. Interacts (via WWW domain) with ABL1. Interacts with RNF157. Interacts with ARF6. Post-translationally, polyubiquitination by RNF157 leads to degradation by the proteasome. In terms of processing, phosphorylation at Ser-610 by SGK1 promotes its localization to the nucleus. Phosphorylated following nuclear translocation. Phosphorylation at Tyr-546 by ABL1 enhances transcriptional activation activity and reduces the affinity for RASD1/DEXRAS1. Acetylation at Lys-204 and Lys-701 by KAT5 promotes its transcription activator activity. Phosphorylated at Ser-459 by PKC upon insulin activation. Expressed in the brain, retinal lens and muscle cells (at protein level).

The protein resides in the cell membrane. Its subcellular location is the cytoplasm. The protein localises to the nucleus. It is found in the cell projection. It localises to the growth cone. The protein resides in the nucleus speckle. Transcription coregulator that can have both coactivator and corepressor functions. Adapter protein that forms a transcriptionally active complex with the gamma-secretase-derived amyloid precursor protein (APP) intracellular domain. Plays a central role in the response to DNA damage by translocating to the nucleus and inducing apoptosis. May act by specifically recognizing and binding histone H2AX phosphorylated on 'Tyr-142' (H2AXY142ph) at double-strand breaks (DSBs), recruiting other pro-apoptosis factors such as MAPK8/JNK1. Required for histone H4 acetylation at double-strand breaks (DSBs). Its ability to specifically bind modified histones and chromatin modifying enzymes such as KAT5/TIP60, probably explains its transcription activation activity. Functions in association with TSHZ3, SET and HDAC factors as a transcriptional repressor, that inhibits the expression of CASP4. Associates with chromatin in a region surrounding the CASP4 transcriptional start site(s). Involved in hippocampal neurite branching and neuromuscular junction formation, as a result plays a role in spatial memory functioning. Plays a role in the maintenance of lens transparency. May play a role in muscle cell strength. Acts as a molecular adapter that functions in neurite outgrowth by activating the RAC1-ARF6 axis upon insulin treatment. The polypeptide is Amyloid beta precursor protein binding family B member 1 (Mus musculus (Mouse)).